Here is a 514-residue protein sequence, read N- to C-terminus: ATP synthase subunit alpha (514 aa).

An ATP-binding site is contributed by 170–177; it reads GDRQIGKT.

It belongs to the ATPase alpha/beta chains family. F-type ATPases have 2 components, CF(1) - the catalytic core - and CF(0) - the membrane proton channel. CF(1) has five subunits: alpha(3), beta(3), gamma(1), delta(1), epsilon(1). CF(0) has three main subunits: a(1), b(2) and c(9-12). The alpha and beta chains form an alternating ring which encloses part of the gamma chain. CF(1) is attached to CF(0) by a central stalk formed by the gamma and epsilon chains, while a peripheral stalk is formed by the delta and b chains.

The protein resides in the cell inner membrane. The catalysed reaction is ATP + H2O + 4 H(+)(in) = ADP + phosphate + 5 H(+)(out). In terms of biological role, produces ATP from ADP in the presence of a proton gradient across the membrane. The alpha chain is a regulatory subunit. The chain is ATP synthase subunit alpha from Pseudomonas aeruginosa (strain LESB58).